We begin with the raw amino-acid sequence, 270 residues long: Homeobox protein Hox-D12 (270 aa).

The segment at 102–122 (APEAAAGPEERGRTRPSFAPE) is disordered. The homeobox DNA-binding region spans 202–261 (ARKKRKPYTKQQIAELENEFLVNEFINRQKRKELSNRLNLSDQQVKIWFQNRRMKKKRVV).

It belongs to the Abd-B homeobox family.

It is found in the nucleus. Its function is as follows. Sequence-specific transcription factor which is part of a developmental regulatory system that provides cells with specific positional identities on the anterior-posterior axis. The chain is Homeobox protein Hox-D12 (HOXD12) from Homo sapiens (Human).